The following is a 222-amino-acid chain: Pyrrolidone-carboxylate peptidase (222 aa).

Active-site residues include Glu-80, Cys-146, and His-170.

This sequence belongs to the peptidase C15 family. In terms of assembly, homotetramer.

It localises to the cytoplasm. The enzyme catalyses Release of an N-terminal pyroglutamyl group from a polypeptide, the second amino acid generally not being Pro.. Its function is as follows. Removes 5-oxoproline from various penultimate amino acid residues except L-proline. The sequence is that of Pyrrolidone-carboxylate peptidase from Mycobacterium tuberculosis (strain ATCC 25177 / H37Ra).